The chain runs to 805 residues: Angiotensin-converting enzyme 2 (805 aa).

A signal peptide spans 1 to 17 (MSGSSWLLLSLVAVTAA). Residues 18 to 740 (QSTIEEQAKT…LGPPNQPPVS (723 aa)) lie on the Extracellular side of the membrane. The Peptidase M2 domain occupies 19-607 (STIEEQAKTF…QNKNSFVGWS (589 aa)). Residues Asn-53, Asn-90, and Asn-103 are each glycosylated (N-linked (GlcNAc...) asparagine). A disulfide bridge links Cys-133 with Cys-141. A chloride-binding site is contributed by Arg-169. A substrate-binding site is contributed by Arg-273. The N-linked (GlcNAc...) asparagine glycan is linked to Asn-322. Cysteines 344 and 361 form a disulfide. 345–346 (HP) is a substrate binding site. His-374 provides a ligand contact to Zn(2+). Residue Glu-375 is the Proton acceptor of the active site. His-378 and Glu-402 together coordinate Zn(2+). Asn-432 carries N-linked (GlcNAc...) asparagine glycosylation. Positions 477 and 481 each coordinate chloride. Catalysis depends on His-505, which acts as the Proton donor. Tyr-515 contacts substrate. Cys-530 and Cys-542 form a disulfide bridge. An N-linked (GlcNAc...) asparagine glycan is attached at Asn-546. A Collectrin-like domain is found at 614-805 (ADQSIKVRIS…QNTDDVQTSF (192 aa)). Residues 652-659 (RKYFLEVK) form an essential for cleavage by ADAM17 region. The N-linked (GlcNAc...) asparagine glycan is linked to Asn-690. An essential for cleavage by TMPRSS11D and TMPRSS2 region spans residues 697–716 (RTEVEKAIRMSRSRINDAFR). A helical transmembrane segment spans residues 741–761 (IWLIVFGVVMGVIVVGIVVLI). Residues 762–805 (FTGIRDRKKKNKARNEENPYASIDISKGENNPGFQNTDDVQTSF) lie on the Cytoplasmic side of the membrane. Residues 772–805 (NKARNEENPYASIDISKGENNPGFQNTDDVQTSF) form a disordered region. An LIR motif is present at residues 778–786 (ENPYASIDI). Tyr-781 is subject to Phosphotyrosine. The Endocytic sorting signal motif lies at 781-784 (YASI). The short motif at 781 to 785 (YASID) is the SH2-binding element. The residue at position 783 (Ser-783) is a Phosphoserine. Residue Lys-788 forms a Glycyl lysine isopeptide (Lys-Gly) (interchain with G-Cter in ubiquitin) linkage. Polar residues predominate over residues 789 to 805 (GENNPGFQNTDDVQTSF). The PTB motif lies at 792–795 (NPGF). The PDZ-binding motif lies at 803-805 (TSF).

The protein belongs to the peptidase M2 family. Homodimer. Interacts with the catalytically active form of TMPRSS2. Interacts with SLC6A19; this interaction is essential for expression and function of SLC6A19 in intestine. Interacts with ITGA5:ITGB1. Probably interacts (via endocytic sorting signal motif) with AP2M1; the interaction is inhibited by phosphorylation of Tyr-781. Interacts (via PDZ-binding motif) with NHERF1 (via PDZ domains); the interaction may enhance ACE2 membrane residence. Zn(2+) is required as a cofactor. Chloride serves as cofactor. In terms of processing, proteolytic cleavage by ADAM17 generates a secreted form. Also cleaved by serine proteases: TMPRSS2, TMPRSS11D and HPN/TMPRSS1. Post-translationally, phosphorylated. Phosphorylation at Tyr-781 probably inhibits interaction with AP2M1 and enables interactions with proteins containing SH2 domains. Ubiquitinated. Ubiquitinated on Lys-788 via 'Lys-48'-linked ubiquitin. 'Lys-48'-linked deubiquitinated by USP50 on the Lys-788; leading to its stabilization.

The protein resides in the secreted. Its subcellular location is the cell membrane. The protein localises to the cytoplasm. It localises to the cell projection. It is found in the cilium. The protein resides in the apical cell membrane. The catalysed reaction is angiotensin II + H2O = angiotensin-(1-7) + L-phenylalanine. It carries out the reaction angiotensin I + H2O = angiotensin-(1-9) + L-leucine. The enzyme catalyses bradykinin(1-8) + H2O = bradykinin(1-7) + L-phenylalanine. It catalyses the reaction neurotensin + H2O = neurotensin-(1-12) + L-leucine. The catalysed reaction is kinetensin + H2O = kinetensin-(1-8) + L-leucine. It carries out the reaction dynorphin A-(1-13) + H2O = dynorphin A-(1-12) + L-lysine. The enzyme catalyses apelin-13 + H2O = apelin-12 + L-phenylalanine. It catalyses the reaction [Pyr1]apelin-13 + H2O = [Pyr1]apelin-12 + L-phenylalanine. The catalysed reaction is apelin-17 + H2O = apelin-16 + L-phenylalanine. Essential counter-regulatory carboxypeptidase of the renin-angiotensin hormone system that is a critical regulator of blood volume, systemic vascular resistance, and thus cardiovascular homeostasis. Converts angiotensin I to angiotensin 1-9, a nine-amino acid peptide with anti-hypertrophic effects in cardiomyocytes, and angiotensin II to angiotensin 1-7, which then acts as a beneficial vasodilator and anti-proliferation agent, counterbalancing the actions of the vasoconstrictor angiotensin II. Also removes the C-terminal residue from three other vasoactive peptides, neurotensin, kinetensin, and des-Arg bradykinin, but is not active on bradykinin. Also cleaves other biological peptides, such as apelins, casomorphins and dynorphin A. Plays an important role in amino acid transport by acting as binding partner of amino acid transporter SLC6A19 in intestine, regulating trafficking, expression on the cell surface, and its catalytic activity. This is Angiotensin-converting enzyme 2 (ACE2) from Pongo abelii (Sumatran orangutan).